A 170-amino-acid polypeptide reads, in one-letter code: Large ribosomal subunit protein uL10 (170 aa).

This sequence belongs to the universal ribosomal protein uL10 family. Part of the ribosomal stalk of the 50S ribosomal subunit. The N-terminus interacts with L11 and the large rRNA to form the base of the stalk. The C-terminus forms an elongated spine to which L12 dimers bind in a sequential fashion forming a multimeric L10(L12)X complex.

In terms of biological role, forms part of the ribosomal stalk, playing a central role in the interaction of the ribosome with GTP-bound translation factors. The sequence is that of Large ribosomal subunit protein uL10 from Chlamydia abortus (strain DSM 27085 / S26/3) (Chlamydophila abortus).